Consider the following 42-residue polypeptide: Photosystem I reaction center subunit IX (42 aa).

Residues 7–27 (FLSTAPVLIMALLTVTAGILI) traverse the membrane as a helical segment.

Belongs to the PsaJ family.

It is found in the cellular thylakoid membrane. Functionally, may help in the organization of the PsaE and PsaF subunits. The sequence is that of Photosystem I reaction center subunit IX from Crocosphaera subtropica (strain ATCC 51142 / BH68) (Cyanothece sp. (strain ATCC 51142)).